A 297-amino-acid chain; its full sequence is HTH-type transcriptional regulator ArgP (297 aa).

Residues 4 to 60 (PDYRTLQALDAVIRERGFERAAQKLCITQSAVSQRIKQLENMFGQPLLVRTVPPRPT) form the HTH lysR-type domain. The H-T-H motif DNA-binding region spans 21-40 (FERAAQKLCITQSAVSQRIK).

This sequence belongs to the LysR transcriptional regulatory family. Homodimer.

Its function is as follows. Controls the transcription of genes involved in arginine and lysine metabolism. This chain is HTH-type transcriptional regulator ArgP, found in Escherichia coli O127:H6 (strain E2348/69 / EPEC).